Reading from the N-terminus, the 320-residue chain is Undecaprenyl-diphosphatase (320 aa).

8 helical membrane passes run 9–29 (FVLISAVSAALSVVLFPLEVF), 82–102 (GVAFTAIIQLGSIAAVLWYFW), 130–150 (LGIVLGTIPIVFFGLLIKTFI), 161–181 (LGAIAVASIVMSLLLGVGEKL), 191–211 (LTMQDGLLMGLAQALTLIPGV), 236–256 (FLLGIPAITLAGLVELKDLLA), 265–285 (LPLIMGVISAAIFSYLAIAGL), and 296–316 (VFIWYRLVFGVAILGAISAGI).

It belongs to the UppP family.

It localises to the cell inner membrane. The enzyme catalyses di-trans,octa-cis-undecaprenyl diphosphate + H2O = di-trans,octa-cis-undecaprenyl phosphate + phosphate + H(+). In terms of biological role, catalyzes the dephosphorylation of undecaprenyl diphosphate (UPP). Confers resistance to bacitracin. In Nostoc sp. (strain PCC 7120 / SAG 25.82 / UTEX 2576), this protein is Undecaprenyl-diphosphatase.